Here is a 576-residue protein sequence, read N- to C-terminus: Proline--tRNA ligase (576 aa).

Belongs to the class-II aminoacyl-tRNA synthetase family. ProS type 1 subfamily. Homodimer.

Its subcellular location is the cytoplasm. The catalysed reaction is tRNA(Pro) + L-proline + ATP = L-prolyl-tRNA(Pro) + AMP + diphosphate. Functionally, catalyzes the attachment of proline to tRNA(Pro) in a two-step reaction: proline is first activated by ATP to form Pro-AMP and then transferred to the acceptor end of tRNA(Pro). As ProRS can inadvertently accommodate and process non-cognate amino acids such as alanine and cysteine, to avoid such errors it has two additional distinct editing activities against alanine. One activity is designated as 'pretransfer' editing and involves the tRNA(Pro)-independent hydrolysis of activated Ala-AMP. The other activity is designated 'posttransfer' editing and involves deacylation of mischarged Ala-tRNA(Pro). The misacylated Cys-tRNA(Pro) is not edited by ProRS. This Bordetella parapertussis (strain 12822 / ATCC BAA-587 / NCTC 13253) protein is Proline--tRNA ligase.